The sequence spans 798 residues: Glycogen phosphorylase (798 aa).

An N6-(pyridoxal phosphate)lysine modification is found at Lys646.

This sequence belongs to the glycogen phosphorylase family. The cofactor is pyridoxal 5'-phosphate.

The enzyme catalyses [(1-&gt;4)-alpha-D-glucosyl](n) + phosphate = [(1-&gt;4)-alpha-D-glucosyl](n-1) + alpha-D-glucose 1-phosphate. Functionally, phosphorylase is an important allosteric enzyme in carbohydrate metabolism. Enzymes from different sources differ in their regulatory mechanisms and in their natural substrates. However, all known phosphorylases share catalytic and structural properties. This chain is Glycogen phosphorylase (glgP), found in Bacillus subtilis (strain 168).